The chain runs to 180 residues: Pro-glucagon (180 aa).

The signal sequence occupies residues 1-20 (MKNIYIVAGFFVVLVQGSWQ). The interval 25 to 59 (DTEEKSRSFPASQTDPLEDPDQINEDKRHSQGTFT) is disordered. Phosphoserine is present on Ser-54. A propeptide spanning residues 84–89 (NRNNIA) is cleaved from the precursor. Residues Ser-105 and Ser-108 each carry the phosphoserine modification. Arginine amide is present on Arg-127. The propeptide occupies 131-145 (DFPEEVTIVEELGRR). Phosphoserine is present on residues Ser-150 and Ser-152.

The protein belongs to the glucagon family. In terms of processing, proglucagon is post-translationally processed in a tissue-specific manner in pancreatic A cells and intestinal L cells. In pancreatic A cells, the major bioactive hormone is glucagon cleaved by PCSK2/PC2. In the intestinal L cells PCSK1/PC1 liberates GLP-1, GLP-2, glicentin and oxyntomodulin. GLP-1 is further N-terminally truncated by post-translational processing in the intestinal L cells resulting in GLP-1(7-37) GLP-1-(7-36)amide. The C-terminal amidation is neither important for the metabolism of GLP-1 nor for its effects on the endocrine pancreas.

The protein resides in the secreted. Plays a key role in glucose metabolism and homeostasis. Regulates blood glucose by increasing gluconeogenesis and decreasing glycolysis. A counterregulatory hormone of insulin, raises plasma glucose levels in response to insulin-induced hypoglycemia. Plays an important role in initiating and maintaining hyperglycemic conditions in diabetes. In terms of biological role, potent stimulator of glucose-dependent insulin release. Also stimulates insulin release in response to IL6. Plays important roles on gastric motility and the suppression of plasma glucagon levels. May be involved in the suppression of satiety and stimulation of glucose disposal in peripheral tissues, independent of the actions of insulin. Has growth-promoting activities on intestinal epithelium. May also regulate the hypothalamic pituitary axis (HPA) via effects on LH, TSH, CRH, oxytocin, and vasopressin secretion. Increases islet mass through stimulation of islet neogenesis and pancreatic beta cell proliferation. Inhibits beta cell apoptosis. Functionally, stimulates intestinal growth and up-regulates villus height in the small intestine, concomitant with increased crypt cell proliferation and decreased enterocyte apoptosis. The gastrointestinal tract, from the stomach to the colon is the principal target for GLP-2 action. Plays a key role in nutrient homeostasis, enhancing nutrient assimilation through enhanced gastrointestinal function, as well as increasing nutrient disposal. Stimulates intestinal glucose transport and decreases mucosal permeability. Its function is as follows. Significantly reduces food intake. Inhibits gastric emptying in humans. Suppression of gastric emptying may lead to increased gastric distension, which may contribute to satiety by causing a sensation of fullness. May modulate gastric acid secretion and the gastro-pyloro-duodenal activity. May play an important role in intestinal mucosal growth in the early period of life. This Mesocricetus auratus (Golden hamster) protein is Pro-glucagon (GCG).